The sequence spans 201 residues: Putative lipoprotein Hmuk_2215 (201 aa).

An N-terminal signal peptide occupies residues 1-22 (MCPRPRRAVLLGLGVAMSAIAG). Cys23 carries the post-translational modification N-acetylcysteine. Residue Cys23 is the site of S-archaeol cysteine attachment. 2 disordered regions span residues 25 to 78 (ETAP…ETSE) and 182 to 201 (ATRAVQQGPEPAEFDDGDCP). Residues 69 to 78 (TRADETETSE) are compositionally biased toward basic and acidic residues.

Its subcellular location is the cell membrane. This chain is Putative lipoprotein Hmuk_2215, found in Halomicrobium mukohataei (strain ATCC 700874 / DSM 12286 / JCM 9738 / NCIMB 13541) (Haloarcula mukohataei).